The sequence spans 146 residues: Transcriptional regulator MraZ (146 aa).

SpoVT-AbrB domains follow at residues 4 to 46 and 75 to 118; these read SYEK…SKKS and TIEV…SKEK.

Belongs to the MraZ family. As to quaternary structure, forms oligomers.

The protein localises to the cytoplasm. It is found in the nucleoid. The polypeptide is Transcriptional regulator MraZ (Mycoplasma mobile (strain ATCC 43663 / 163K / NCTC 11711) (Mesomycoplasma mobile)).